The primary structure comprises 175 residues: Putative FAS1 domain-containing protein 081L (175 aa).

The 145-residue stretch at 28–172 (GPIVPSVWTI…GLVHIVDQFP (145 aa)) folds into the FAS1 domain.

This Invertebrate iridescent virus 3 (IIV-3) protein is Putative FAS1 domain-containing protein 081L.